We begin with the raw amino-acid sequence, 377 residues long: Succinyl-diaminopimelate desuccinylase (377 aa).

His68 provides a ligand contact to Zn(2+). Asp70 is a catalytic residue. Asp101 contributes to the Zn(2+) binding site. The active-site Proton acceptor is the Glu135. The Zn(2+) site is built by Glu136, Glu164, and His350.

Belongs to the peptidase M20A family. DapE subfamily. Homodimer. The cofactor is Zn(2+). Requires Co(2+) as cofactor.

The catalysed reaction is N-succinyl-(2S,6S)-2,6-diaminopimelate + H2O = (2S,6S)-2,6-diaminopimelate + succinate. It functions in the pathway amino-acid biosynthesis; L-lysine biosynthesis via DAP pathway; LL-2,6-diaminopimelate from (S)-tetrahydrodipicolinate (succinylase route): step 3/3. In terms of biological role, catalyzes the hydrolysis of N-succinyl-L,L-diaminopimelic acid (SDAP), forming succinate and LL-2,6-diaminopimelate (DAP), an intermediate involved in the bacterial biosynthesis of lysine and meso-diaminopimelic acid, an essential component of bacterial cell walls. This is Succinyl-diaminopimelate desuccinylase from Vibrio cholerae serotype O1 (strain ATCC 39541 / Classical Ogawa 395 / O395).